The primary structure comprises 429 residues: Autophagy-related protein 18 (429 aa).

WD repeat units lie at residues 1–36 (MAMN…KSYE), 69–114 (KRQS…LLYT), 139–182 (PLPQ…AINV), 185–225 (AHRS…KLYQ), 230–269 (SMPS…SSPD), 309–355 (KHNG…AWFK), and 367–407 (VNNG…GGEG). Positions 226-230 (FRRGS) match the L/FRRG motif motif. Low complexity predominate over residues 262-275 (SHPTSSPDASPSSP). The tract at residues 262–308 (SHPTSSPDASPSSPVGRDRSLSQSSSGYSPDRGDLTGDVGSSDFPAR) is disordered.

The protein belongs to the WD repeat PROPPIN family. As to quaternary structure, component of the PI(3,5)P2 regulatory complex.

The protein localises to the preautophagosomal structure membrane. The protein resides in the vacuole membrane. Its subcellular location is the endosome membrane. Its function is as follows. The PI(3,5)P2 regulatory complex regulates both the synthesis and turnover of phosphatidylinositol 3,5-bisphosphate (PtdIns(3,5)P2). Necessary for proper vacuole morphology. Plays an important role in osmotically-induced vacuole fragmentation. Required for cytoplasm to vacuole transport (Cvt) vesicle formation, pexophagy and starvation-induced autophagy. Involved in correct atg9 trafficking to the pre-autophagosomal structure. Might also be involved in premeiotic DNA replication. This Neosartorya fischeri (strain ATCC 1020 / DSM 3700 / CBS 544.65 / FGSC A1164 / JCM 1740 / NRRL 181 / WB 181) (Aspergillus fischerianus) protein is Autophagy-related protein 18 (atg18).